We begin with the raw amino-acid sequence, 332 residues long: Cytoplasmic phosphatidylinositol transfer protein 1 (332 aa).

A phosphoserine mark is found at S119, S122, S270, and S274. Residues 272–281 (PSSAPSTPLS) are compositionally biased toward low complexity. Positions 272 to 332 (PSSAPSTPLS…SEKPCRPKSE (61 aa)) are disordered. A Phosphothreonine modification is found at T278.

Belongs to the PtdIns transfer protein family. PI transfer class IIB subfamily. Widely expressed in brain, with expression in the gray matters of pre- and postnatal brains. As to expression, weakly expressed in brain and is rather confined to the embryonic stage.

It is found in the cytoplasm. The protein resides in the nucleus. The enzyme catalyses a 1,2-diacyl-sn-glycero-3-phospho-(1D-myo-inositol)(in) = a 1,2-diacyl-sn-glycero-3-phospho-(1D-myo-inositol)(out). It carries out the reaction a 1,2-diacyl-sn-glycero-3-phosphate(in) = a 1,2-diacyl-sn-glycero-3-phosphate(out). Catalyzes the transfer of phosphatidylinositol (PI) and phosphatidic acid (PA) between membranes. Binds PA derived from the phospholipase D signaling pathway and among the cellular PA species, preferably binds to the C16:0/16:1 and C16:1/18:1 PA species. Functionally, specifically binds to phosphatidylinositol but not to other phospholipids and may play a role in the phosphoinositide-mediated signaling in the neural development. The sequence is that of Cytoplasmic phosphatidylinositol transfer protein 1 (Pitpnc1) from Mus musculus (Mouse).